Here is a 149-residue protein sequence, read N- to C-terminus: Protein NrdI (149 aa).

Belongs to the NrdI family.

Its function is as follows. Probably involved in ribonucleotide reductase function. This is Protein NrdI from Malacoplasma penetrans (strain HF-2) (Mycoplasma penetrans).